A 268-amino-acid chain; its full sequence is Tryptophan synthase alpha chain (268 aa).

Catalysis depends on proton acceptor residues Glu-49 and Asp-60.

This sequence belongs to the TrpA family. As to quaternary structure, tetramer of two alpha and two beta chains.

It catalyses the reaction (1S,2R)-1-C-(indol-3-yl)glycerol 3-phosphate + L-serine = D-glyceraldehyde 3-phosphate + L-tryptophan + H2O. It functions in the pathway amino-acid biosynthesis; L-tryptophan biosynthesis; L-tryptophan from chorismate: step 5/5. In terms of biological role, the alpha subunit is responsible for the aldol cleavage of indoleglycerol phosphate to indole and glyceraldehyde 3-phosphate. The sequence is that of Tryptophan synthase alpha chain from Shigella boydii serotype 18 (strain CDC 3083-94 / BS512).